The chain runs to 198 residues: Ribose 1,5-bisphosphate phosphokinase PhnN (198 aa).

An ATP-binding site is contributed by 25-32 (GPSGAGKD).

This sequence belongs to the ribose 1,5-bisphosphokinase family.

It catalyses the reaction alpha-D-ribose 1,5-bisphosphate + ATP = 5-phospho-alpha-D-ribose 1-diphosphate + ADP. It participates in metabolic intermediate biosynthesis; 5-phospho-alpha-D-ribose 1-diphosphate biosynthesis; 5-phospho-alpha-D-ribose 1-diphosphate from D-ribose 5-phosphate (route II): step 3/3. Catalyzes the phosphorylation of ribose 1,5-bisphosphate to 5-phospho-D-ribosyl alpha-1-diphosphate (PRPP). This chain is Ribose 1,5-bisphosphate phosphokinase PhnN, found in Bradyrhizobium diazoefficiens (strain JCM 10833 / BCRC 13528 / IAM 13628 / NBRC 14792 / USDA 110).